Here is a 338-residue protein sequence, read N- to C-terminus: Glyceraldehyde-3-phosphate dehydrogenase (338 aa).

Residues 12 to 13, Asp-34, and Arg-79 contribute to the NAD(+) site; that span reads RI. D-glyceraldehyde 3-phosphate contacts are provided by residues 150–152, Thr-181, 210–211, and Arg-233; these read SCT and TG. Cys-151 acts as the Nucleophile in catalysis. Asn-315 is an NAD(+) binding site.

It belongs to the glyceraldehyde-3-phosphate dehydrogenase family. Homotetramer.

Its subcellular location is the cytoplasm. The enzyme catalyses D-glyceraldehyde 3-phosphate + phosphate + NAD(+) = (2R)-3-phospho-glyceroyl phosphate + NADH + H(+). Its pathway is carbohydrate degradation; glycolysis; pyruvate from D-glyceraldehyde 3-phosphate: step 1/5. The chain is Glyceraldehyde-3-phosphate dehydrogenase (GPD) from Sordaria macrospora.